The following is a 328-amino-acid chain: Acetaldehyde dehydrogenase 3 (328 aa).

Residue 17 to 20 (SGNI) participates in NAD(+) binding. C135 acts as the Acyl-thioester intermediate in catalysis. Residues 166–174 (SAGPGTRAN) and N298 contribute to the NAD(+) site.

Belongs to the acetaldehyde dehydrogenase family.

It carries out the reaction acetaldehyde + NAD(+) + CoA = acetyl-CoA + NADH + H(+). The polypeptide is Acetaldehyde dehydrogenase 3 (Nocardia farcinica (strain IFM 10152)).